The chain runs to 200 residues: Ribosomal RNA large subunit methyltransferase E (200 aa).

Residues Gly-51, Trp-53, Asp-71, Asp-90, and Asp-112 each contribute to the S-adenosyl-L-methionine site. Lys-151 acts as the Proton acceptor in catalysis.

It belongs to the class I-like SAM-binding methyltransferase superfamily. RNA methyltransferase RlmE family.

The protein resides in the cytoplasm. The catalysed reaction is uridine(2552) in 23S rRNA + S-adenosyl-L-methionine = 2'-O-methyluridine(2552) in 23S rRNA + S-adenosyl-L-homocysteine + H(+). Specifically methylates the uridine in position 2552 of 23S rRNA at the 2'-O position of the ribose in the fully assembled 50S ribosomal subunit. In Treponema pallidum (strain Nichols), this protein is Ribosomal RNA large subunit methyltransferase E.